Consider the following 184-residue polypeptide: MSCRSEHIWIELIVGSRKISNFCWAFILFLGSLGFVLVGSSSYLGKNLISLVPSQQILFFPQGIVMSFYGIAGLFISSYLWCTISWNVGSGYDRFDRKEGIVCIFRWGFPGKNRRIFLRFRMKDIQSIRIEVKEGISARRVLYMEIKGQGAVPLTRTDENLTPREIEQKAAELAYFLRVPIEVF.

2 consecutive transmembrane segments (helical) span residues 19–39 (ISNF…VLVG) and 57–77 (ILFF…LFIS).

This sequence belongs to the Ycf4 family.

The protein localises to the plastid. It localises to the chloroplast thylakoid membrane. Functionally, seems to be required for the assembly of the photosystem I complex. The polypeptide is Photosystem I assembly protein Ycf4 (Eucalyptus globulus subsp. globulus (Tasmanian blue gum)).